The chain runs to 349 residues: Isopentenyl-diphosphate delta-isomerase (349 aa).

9–10 (RK) contacts substrate. FMN is bound by residues 65–67 (AMT), Ser-95, and Asn-124. 95–97 (STH) lines the substrate pocket. Gln-154 is a substrate binding site. Position 155 (Glu-155) interacts with Mg(2+). Residues Lys-186, Ser-211, Thr-216, 262-264 (GVR), and 283-284 (SR) contribute to the FMN site.

It belongs to the IPP isomerase type 2 family. Homooctamer. Dimer of tetramers. The cofactor is FMN. Requires NADPH as cofactor. Mg(2+) is required as a cofactor.

The protein resides in the cytoplasm. It carries out the reaction isopentenyl diphosphate = dimethylallyl diphosphate. Involved in the biosynthesis of isoprenoids. Catalyzes the 1,3-allylic rearrangement of the homoallylic substrate isopentenyl (IPP) to its allylic isomer, dimethylallyl diphosphate (DMAPP). In Staphylococcus haemolyticus (strain JCSC1435), this protein is Isopentenyl-diphosphate delta-isomerase.